The sequence spans 374 residues: DNA replication and repair protein RecF (374 aa).

Residue 30-37 participates in ATP binding; it reads GENAQGKT.

This sequence belongs to the RecF family.

The protein resides in the cytoplasm. In terms of biological role, the RecF protein is involved in DNA metabolism; it is required for DNA replication and normal SOS inducibility. RecF binds preferentially to single-stranded, linear DNA. It also seems to bind ATP. This chain is DNA replication and repair protein RecF, found in Geobacillus sp. (strain WCH70).